The following is an 852-amino-acid chain: MFKSKTSTLSYDETPNSNEGDRNATPVNPKEKSQTKHLNIPGDRSRHSSIADSKRSSSRYDGGYSADIIPAQLRFIDNIDYGTRLRKTLHRNSVVSNGYNKLSENDRWYFDLFDRKYFENYLEEPTYIKIFKKKEGLEQFDRMFLAQELKIPDVYKSTTYQGEPAVANSELFKNSICCCTFSHDGKYMVIGCKDGSLHLWKVINSPVKRSEMGRSEKSVSASRANSLKIQRHLASISSHNGSISSNDLKPSDQFEGPSKQLHLYAPVFYSDVFRVFMEHALDILDANWSKNGFLITASMDKTAKLWHPERKYSLKTFVHPDFVTSAIFFPNDDRFIITGCLDHRCRLWSILDNEVSYAFDCKDLITSLTLSPPGGEYTIIGTFNGYIYVLLTHGLKFVSSFHVSDKSTQGTTKNSFHPSSEYGKVQHGPRITGLQCFFSKVDKNLRLIVTTNDSKIQIFDLNEKKPLELFKGFQSGSSRHRGQFLMMKNEPVVFTGSDDHWFYTWKMQSFNLSAEMNCTAPHRKKRLSGSMSLKGLLRIVSNKSTNDECLTETSNQSSSHTFTNSSKNVLQTQTVGSQAIKNNHYISFHAHNSPVTCASIAPDVAIKNLSLSNDLIFELTSQYFKEMGQNYSESKETCDNKPNHPVTETGGFSSNLSNVVNNVGTILITTDSQGLIRVFRTDILPEIRKKIIEKFHEYNLFHLEAAGKINNHNNDSILENRMDERSSTEDNEFSTTPPSNTHNSRPSHDFCELHPNNSPVISGMPSRASAIFKNSIFNKSNGSFISLKSRSESTSSTVFGPHDIPRVSTTYPKLKCDVCNGSNFECASKNPIAGGDSGFTCADCGTILNNFR.

Polar residues predominate over residues 1 to 18; that stretch reads MFKSKTSTLSYDETPNSN. The disordered stretch occupies residues 1-60; it reads MFKSKTSTLSYDETPNSNEGDRNATPVNPKEKSQTKHLNIPGDRSRHSSIADSKRSSSRY. WD repeat units lie at residues 171–210, 278–316, 318–358, 426–471, 476–515, and 651–689; these read LFKN…VKRS, EHAL…SLKT, VHPD…VSYA, QHGP…ELFK, GSSR…LSAE, and GFSS…EIRK. Position 716 is a phosphoserine (S716). The disordered stretch occupies residues 723-748; sequence DERSSTEDNEFSTTPPSNTHNSRPSH. The span at 733–744 shows a compositional bias: polar residues; that stretch reads FSTTPPSNTHNS.

Belongs to the WD repeat DGR2 family.

The sequence is that of 2-deoxy-glucose resistant protein 2 (DGR2) from Saccharomyces cerevisiae (strain ATCC 204508 / S288c) (Baker's yeast).